The chain runs to 250 residues: Triosephosphate isomerase (250 aa).

Residue 9–11 (NWK) coordinates substrate. The active-site Electrophile is histidine 96. The Proton acceptor role is filled by glutamate 166. Substrate-binding positions include glycine 172, serine 212, and 233 to 234 (GG).

This sequence belongs to the triosephosphate isomerase family. As to quaternary structure, homodimer.

Its subcellular location is the cytoplasm. It carries out the reaction D-glyceraldehyde 3-phosphate = dihydroxyacetone phosphate. The protein operates within carbohydrate biosynthesis; gluconeogenesis. It functions in the pathway carbohydrate degradation; glycolysis; D-glyceraldehyde 3-phosphate from glycerone phosphate: step 1/1. Its function is as follows. Involved in the gluconeogenesis. Catalyzes stereospecifically the conversion of dihydroxyacetone phosphate (DHAP) to D-glyceraldehyde-3-phosphate (G3P). The polypeptide is Triosephosphate isomerase (Chlorobium phaeovibrioides (strain DSM 265 / 1930) (Prosthecochloris vibrioformis (strain DSM 265))).